Consider the following 352-residue polypeptide: C-C chemokine receptor type 5 (352 aa).

The Extracellular portion of the chain corresponds to 1–30 (MDYQVSSPTYDIDYNTSEPCQKINVKQIAA). Tyr-3 carries the post-translational modification Sulfotyrosine. O-linked (GalNAc...) serine glycans are attached at residues Ser-6 and Ser-7. Residues Tyr-10 and Tyr-14 each carry the sulfotyrosine modification. 2 cysteine pairs are disulfide-bonded: Cys-20–Cys-269 and Cys-101–Cys-178. A helical membrane pass occupies residues 31–58 (RLLPLLYSLVFIFGFVGNILVVLILINC). Over 59–68 (KRLKSMTDIY) the chain is Cytoplasmic. The helical transmembrane segment at 69–89 (LLNLAISDLLFLLTVPFWAHY) threads the bilayer. The Extracellular segment spans residues 90–102 (AAAQWDFGNTMCQ). A helical transmembrane segment spans residues 103–124 (LLTGLYFIGFFSGIFFIILLTI). The Cytoplasmic portion of the chain corresponds to 125–141 (DRYLAIVHAVFALKART). A helical membrane pass occupies residues 142–166 (VTFGVVTSVITWVVAVFASLPRIIF). Topologically, residues 167–198 (TRSQREGLHYTCSSHFPYSQYQFWKNFQTLKI) are extracellular. The chain crosses the membrane as a helical span at residues 199 to 218 (VILGLVLPLLVMVICYSGIL). Topologically, residues 219–235 (KTLLRCRNEKKRHRAVR) are cytoplasmic. The chain crosses the membrane as a helical span at residues 236–260 (LIFTIMIVYFLFWAPYNIVLLLNTF). Residues 261-277 (QEFFGLNNCSSSNRLDQ) lie on the Extracellular side of the membrane. The chain crosses the membrane as a helical span at residues 278 to 301 (AMQVTETLGMTHCCINPIIYAFVG). Residues 302 to 352 (EKFRNYLLVFFQKHIAKRFCKCCSIFQQEAPERASSVYTRSTGEQEISVGL) lie on the Cytoplasmic side of the membrane. 3 S-palmitoyl cysteine lipidation sites follow: Cys-321, Cys-323, and Cys-324. Residues Ser-336, Ser-337, Ser-342, and Ser-349 each carry the phosphoserine; by BARK1 modification.

Belongs to the G-protein coupled receptor 1 family. Interacts with PRAF2. Efficient ligand binding to CCL3/MIP-1alpha and CCL4/MIP-1beta requires sulfation, O-glycosylation and sialic acid modifications. Glycosylation on Ser-6 is required for efficient binding of CCL4. Interacts with GRK2. Interacts with ARRB1 and ARRB2. Interacts with CNIH4. Interacts with S100A4; this interaction stimulates T-lymphocyte chemotaxis. Sulfated on at least 2 of the N-terminal tyrosines. Sulfation is required for efficient binding of the chemokines, CCL3 and CCL4. In terms of processing, palmitoylation in the C-terminal is important for cell surface expression. Post-translationally, phosphorylation on serine residues in the C-terminal is stimulated by binding CC chemokines especially by APO-RANTES. O-glycosylated, but not N-glycosylated. Ser-6 appears to be the major site even if Ser-7 may be also O-glycosylated. Also sialylated glycans present which contribute to chemokine binding. Thr-16 and Ser-17 may also be glycosylated and, if so, with small moieties such as a T-antigen.

The protein localises to the cell membrane. Receptor for a number of inflammatory CC-chemokines including CCL3/MIP-1-alpha, CCL4/MIP-1-beta and RANTES and subsequently transduces a signal by increasing the intracellular calcium ion level. May play a role in the control of granulocytic lineage proliferation or differentiation. Participates in T-lymphocyte migration to the infection site by acting as a chemotactic receptor. This chain is C-C chemokine receptor type 5 (CCR5), found in Cercopithecus cephus (Moustached monkey).